Here is a 504-residue protein sequence, read N- to C-terminus: Histidine ammonia-lyase (504 aa).

Residues 142–144 (ASG) constitute a cross-link (5-imidazolinone (Ala-Gly)). Ser-143 is subject to 2,3-didehydroalanine (Ser).

Belongs to the PAL/histidase family. In terms of processing, contains an active site 4-methylidene-imidazol-5-one (MIO), which is formed autocatalytically by cyclization and dehydration of residues Ala-Ser-Gly.

It is found in the cytoplasm. It carries out the reaction L-histidine = trans-urocanate + NH4(+). The protein operates within amino-acid degradation; L-histidine degradation into L-glutamate; N-formimidoyl-L-glutamate from L-histidine: step 1/3. This chain is Histidine ammonia-lyase, found in Staphylococcus aureus (strain MSSA476).